The chain runs to 291 residues: MNKLTIATRKSKLAQTQTEIIMKSLKDKFNIDSEKMLIVTEGDRKLDVSLAKIGGKGLFVKDIEIALLEKRADGAVHSMKDVPYELSHEFEIAAITEREDIRDVLISKDNIPFKELRKGAIIGTSSIRRACQLKLMRNDLDIVPIRGNVQTRLEKMKEQNLDGIILASAGLKRLNEEDIITEYFDPKVFIPAVAQGALGIECLKTSSAKKYFEKMEDSNAKLTVEAERSFMRMLNGDCHSLIGAYSEIQGNDLYMIGIYDIGGRIVKKDILGDKNDHIELGRKLANKILEI.

Cys238 is subject to S-(dipyrrolylmethanemethyl)cysteine.

It belongs to the HMBS family. As to quaternary structure, monomer. Requires dipyrromethane as cofactor.

The enzyme catalyses 4 porphobilinogen + H2O = hydroxymethylbilane + 4 NH4(+). Its pathway is porphyrin-containing compound metabolism; protoporphyrin-IX biosynthesis; coproporphyrinogen-III from 5-aminolevulinate: step 2/4. In terms of biological role, tetrapolymerization of the monopyrrole PBG into the hydroxymethylbilane pre-uroporphyrinogen in several discrete steps. The polypeptide is Porphobilinogen deaminase (Clostridium beijerinckii (strain ATCC 51743 / NCIMB 8052) (Clostridium acetobutylicum)).